A 485-amino-acid chain; its full sequence is uncharacterized protein (485 aa).

The next 11 membrane-spanning stretches (helical) occupy residues 79–99 (LVTLGATLYTLGILFGNLIFA), 117–137 (VFALLQIPIALSVNLAMFLVF), 139–159 (FFSGLFGSVGLSNGSGSLADL), 170–190 (VIYFTVLSIGPGIAPIISGFI), 199–219 (WEFWILLILSGFNLFWAFLLL), 275–295 (ILICVACTIGSIYGMINLVLI), 313–333 (GLMYISITLGLFSAVFIAMPI), 355–375 (LPMGFIGITLFEIGILLFGWT), 380–400 (IFWFVPTIGSAIMGGGYIMTS), 421–441 (GVKIFQLLLGAIFPLFAESLF), and 448–468 (WGCTLLAFILLACGCSLPILF).

Belongs to the major facilitator superfamily. CAR1 family.

The protein resides in the golgi apparatus. It localises to the membrane. This is an uncharacterized protein from Schizosaccharomyces pombe (strain 972 / ATCC 24843) (Fission yeast).